The sequence spans 488 residues: Glutamyl-tRNA(Gln) amidotransferase subunit B, mitochondrial (488 aa).

Belongs to the GatB/GatE family. GatB subfamily. Subunit of the heterotrimeric GatFAB amidotransferase (AdT) complex, composed of A, B and F subunits.

The protein resides in the mitochondrion. It carries out the reaction L-glutamyl-tRNA(Gln) + L-glutamine + ATP + H2O = L-glutaminyl-tRNA(Gln) + L-glutamate + ADP + phosphate + H(+). Allows the formation of correctly charged Gln-tRNA(Gln) through the transamidation of misacylated Glu-tRNA(Gln) in the mitochondria. The reaction takes place in the presence of glutamine and ATP through an activated gamma-phospho-Glu-tRNA(Gln). This is Glutamyl-tRNA(Gln) amidotransferase subunit B, mitochondrial from Candida albicans (strain WO-1) (Yeast).